The chain runs to 427 residues: Histidinol dehydrogenase (427 aa).

3 residues coordinate NAD(+): Tyr123, Gln185, and Asn208. Ser231, Gln253, and His256 together coordinate substrate. Residues Gln253 and His256 each contribute to the Zn(2+) site. Residues Glu321 and His322 each act as proton acceptor in the active site. His322, Asp355, Glu409, and His414 together coordinate substrate. Position 355 (Asp355) interacts with Zn(2+). His414 is a binding site for Zn(2+).

Belongs to the histidinol dehydrogenase family. Requires Zn(2+) as cofactor.

It catalyses the reaction L-histidinol + 2 NAD(+) + H2O = L-histidine + 2 NADH + 3 H(+). The protein operates within amino-acid biosynthesis; L-histidine biosynthesis; L-histidine from 5-phospho-alpha-D-ribose 1-diphosphate: step 9/9. In terms of biological role, catalyzes the sequential NAD-dependent oxidations of L-histidinol to L-histidinaldehyde and then to L-histidine. This chain is Histidinol dehydrogenase (hisD), found in Bacillus subtilis (strain 168).